A 231-amino-acid polypeptide reads, in one-letter code: MAKSSRRYKEIAQKIDRDRLYPLTDALALVKEVATAKFDESVDIAINLGIDVRKSDQVVRGAVVLPSGTGKTVRVAVFAQGDKAKEALDAGADIVGLEDLAEQVKANEINFDLAIASPDSMRIVGQLGQILGPRGLMPNPKVGTVTLDVASAVKNAKAGQIQFRADKAGIVHCTVGRASFSVDALRENIIALVDALNKSKPATSKGVYLRKMAISSTMGAGVRVDHAGIIN.

It belongs to the universal ribosomal protein uL1 family. Part of the 50S ribosomal subunit.

Functionally, binds directly to 23S rRNA. The L1 stalk is quite mobile in the ribosome, and is involved in E site tRNA release. Protein L1 is also a translational repressor protein, it controls the translation of the L11 operon by binding to its mRNA. This chain is Large ribosomal subunit protein uL1, found in Nitrosomonas eutropha (strain DSM 101675 / C91 / Nm57).